The chain runs to 184 residues: MSAAAGLIPPPVSWAQRNDLIYVIIDVECKDIEHKVTEKTFTFKGVNVLDPSKKYEVTLNFLHEVDPEKVTSKNIGRCLEFTIPKKAAGPYWSSLTTDKTKLHFLKANFAKWRDESDDEEGDQKDNSMFGNFLNSPGGDWNNKFDDFNVDDEEEDSDDNIPSLSQNDEDDEEGGEGDKEKKPAA.

Positions 7-96 (LIPPPVSWAQ…AAGPYWSSLT (90 aa)) constitute a CS domain. The segment at 115–184 (ESDDEEGDQK…EGDKEKKPAA (70 aa)) is disordered. 5 positions are modified to phosphoserine: S116, S127, S135, S156, and S162. The span at 147 to 158 (FNVDDEEEDSDD) shows a compositional bias: acidic residues. Over residues 175 to 184 (EGDKEKKPAA) the composition is skewed to basic and acidic residues.

Belongs to the p23/wos2 family.

It localises to the cytoplasm. It catalyses the reaction prostaglandin H2 = prostaglandin E2. In terms of biological role, cytosolic prostaglandin synthase that catalyzes the oxidoreduction of prostaglandin endoperoxide H2 (PGH2) to prostaglandin E2 (PGE2). Through production of PGE2 may regulate the activity of non-muscle myosin II in an autocrine or paracrine fashion; this may influence border cell and nurse cell stiffness to facilitate border cell migration during oogenesis. This is Cytosolic Prostaglandin E synthase from Drosophila melanogaster (Fruit fly).